The chain runs to 207 residues: Small ribosomal subunit protein uS7y (207 aa).

Alanine 2 is subject to N-acetylalanine.

It belongs to the universal ribosomal protein uS7 family. In terms of tissue distribution, expressed in root tips, lateral root primordia, leaf primordia, shoot apical meristem and vasculature of cotyledons.

This chain is Small ribosomal subunit protein uS7y, found in Arabidopsis thaliana (Mouse-ear cress).